The primary structure comprises 385 residues: S-adenosylmethionine synthase (385 aa).

His-16 contributes to the ATP binding site. Asp-18 serves as a coordination point for Mg(2+). Glu-44 contacts K(+). Residues Glu-57 and Gln-100 each contribute to the L-methionine site. A flexible loop region spans residues 100-110; that stretch reads QSPDINQGVDR. ATP is bound by residues 164–166, 230–231, Asp-239, 245–246, Ala-262, and Lys-266; these read DGK, KF, and RK. Asp-239 provides a ligand contact to L-methionine. L-methionine is bound at residue Lys-270.

This sequence belongs to the AdoMet synthase family. In terms of assembly, homotetramer; dimer of dimers. Mg(2+) is required as a cofactor. Requires K(+) as cofactor.

The protein resides in the cytoplasm. The catalysed reaction is L-methionine + ATP + H2O = S-adenosyl-L-methionine + phosphate + diphosphate. Its pathway is amino-acid biosynthesis; S-adenosyl-L-methionine biosynthesis; S-adenosyl-L-methionine from L-methionine: step 1/1. Functionally, catalyzes the formation of S-adenosylmethionine (AdoMet) from methionine and ATP. The overall synthetic reaction is composed of two sequential steps, AdoMet formation and the subsequent tripolyphosphate hydrolysis which occurs prior to release of AdoMet from the enzyme. The polypeptide is S-adenosylmethionine synthase (Helicobacter pylori (strain G27)).